A 488-amino-acid chain; its full sequence is Type II restriction enzyme HgaI (488 aa).

The catalysed reaction is Endonucleolytic cleavage of DNA to give specific double-stranded fragments with terminal 5'-phosphates.. Functionally, an S subtype restriction enzyme that recognizes the double-stranded sequences 5'-GACGC-3' and 5'-GCGTC-3' and cleaves respectively 10 bases after G-1 and 10 bases before G'-1. The sequence is that of Type II restriction enzyme HgaI (hgaIR) from Avibacterium volantium (Pasteurella volantium).